We begin with the raw amino-acid sequence, 256 residues long: Major prion protein (256 aa).

The first 24 residues, 1-24 (MVKSHIGSWILVLFVAMWSDVGLC), serve as a signal peptide directing secretion. The segment at 25–233 (KKRPKPGGGW…ESQAYYQRGA (209 aa)) is interaction with GRB2, ERI3 and SYN1. Residues 28–110 (PKPGGGWNTG…QWNKPSKPKT (83 aa)) form a disordered region. A run of 5 repeats spans residues 54-62 (PQGGGGWGQ), 63-70 (PHGGGWGQ), 71-78 (PHGGGWGQ), 79-86 (PHGGGWGQ), and 87-95 (PHGGGGWGQ). The 5 X 8 AA tandem repeats of P-H-G-G-G-W-G-Q stretch occupies residues 54–95 (PQGGGGWGQPHGGGWGQPHGGGWGQPHGGGWGQPHGGGGWGQ). The span at 55 to 97 (QGGGGWGQPHGGGWGQPHGGGWGQPHGGGWGQPHGGGGWGQGG) shows a compositional bias: gly residues. H64, G65, G66, H72, G73, G74, H80, G81, G82, H88, G90, and G91 together coordinate Cu(2+). C182 and C217 form a disulfide bridge. Residues N184 and N200 are each glycosylated (N-linked (GlcNAc...) asparagine). Residue A233 is the site of GPI-anchor amidated alanine attachment. Positions 234–256 (SVILFSSPPVILLISFLIFLIVG) are cleaved as a propeptide — removed in mature form.

Belongs to the prion family. As to quaternary structure, monomer and homodimer. Has a tendency to aggregate into amyloid fibrils containing a cross-beta spine, formed by a steric zipper of superposed beta-strands. Soluble oligomers may represent an intermediate stage on the path to fibril formation. Copper binding may promote oligomerization. Interacts with GRB2, APP, ERI3/PRNPIP and SYN1. Mislocalized cytosolically exposed PrP interacts with MGRN1; this interaction alters MGRN1 subcellular location and causes lysosomal enlargement. Interacts with KIAA1191.

The protein localises to the cell membrane. It localises to the golgi apparatus. In terms of biological role, its primary physiological function is unclear. Has cytoprotective activity against internal or environmental stresses. May play a role in neuronal development and synaptic plasticity. May be required for neuronal myelin sheath maintenance. May play a role in iron uptake and iron homeostasis. Soluble oligomers are toxic to cultured neuroblastoma cells and induce apoptosis (in vitro). Association with GPC1 (via its heparan sulfate chains) targets PRNP to lipid rafts. Also provides Cu(2+) or Zn(2+) for the ascorbate-mediated GPC1 deaminase degradation of its heparan sulfate side chains. This Odocoileus hemionus (Mule deer) protein is Major prion protein (PRNP).